The primary structure comprises 180 residues: MNTRLEKFYKENVVPALMKEFGYTNPMEVPKLVKVTLNMGVGEAATNKKILENAVADMSKISGQKPVVTKSRVSVASFKIRDGWPIGCKTTLRRAKMYEFLDRLINISLPRVRDFRGVSGRSFDGRGNFNMGVKEQIIFPEIDFDAVDAIRGMDIAITTTAKTDAEAKALLAAFKFPFRN.

Belongs to the universal ribosomal protein uL5 family. Part of the 50S ribosomal subunit; part of the 5S rRNA/L5/L18/L25 subcomplex. Contacts the 5S rRNA and the P site tRNA. Forms a bridge to the 30S subunit in the 70S ribosome.

This is one of the proteins that bind and probably mediate the attachment of the 5S RNA into the large ribosomal subunit, where it forms part of the central protuberance. In the 70S ribosome it contacts protein S13 of the 30S subunit (bridge B1b), connecting the 2 subunits; this bridge is implicated in subunit movement. Contacts the P site tRNA; the 5S rRNA and some of its associated proteins might help stabilize positioning of ribosome-bound tRNAs. This Xanthomonas campestris pv. campestris (strain 8004) protein is Large ribosomal subunit protein uL5.